Consider the following 307-residue polypeptide: O-acetylserine dependent cystathionine beta-synthase (307 aa).

Position 44 is an N6-(pyridoxal phosphate)lysine (lysine 44). Pyridoxal 5'-phosphate contacts are provided by residues asparagine 74, 178–182, and serine 265; that span reads GSGGT.

It belongs to the cysteine synthase/cystathionine beta-synthase family. Pyridoxal 5'-phosphate is required as a cofactor.

The enzyme catalyses O-acetyl-L-serine + L-homocysteine = L,L-cystathionine + acetate + H(+). In terms of biological role, catalyzes the conversion of O-acetylserine and homocysteine to cystathionine. This chain is O-acetylserine dependent cystathionine beta-synthase (mccA), found in Bacillus subtilis (strain 168).